The sequence spans 782 residues: uncharacterized protein (782 aa).

Residues 22 to 50 constitute a DNA-binding region (zn(2)-C6 fungal-type); it reads CRECHRLKLKCDRVWPCENCKKRGIPNLC. 2 disordered regions span residues 105-126 and 645-665; these read GEKP…DPDH and VPSS…AEKA. A compositionally biased stretch (basic and acidic residues) spans 654-665; the sequence is SPDDSSMRAEKA.

The protein localises to the nucleus. This is an uncharacterized protein from Schizosaccharomyces pombe (strain 972 / ATCC 24843) (Fission yeast).